The primary structure comprises 290 residues: PIH1 domain-containing protein 1 (290 aa).

Phosphoserine is present on residues S12, S16, and S173.

Belongs to the PIH1 family. Component of the R2TP complex composed at least of RUVBL1, RUVBL2, RPAP3 and PIHD1. Component of the PAQosome complex which is responsible for the biogenesis of several protein complexes and which consists of R2TP complex members RUVBL1, RUVBL2, RPAP3 and PIH1D1, URI complex members PFDN2, PFDN6, PDRG1, UXT and URI1 as well as ASDURF, POLR2E and DNAAF10/WDR92. Interacts with phosphorylated TELO2 and mediates interaction of TELO2 with the R2TP complex. Interacts with phosphorylated ECD, EFTUD2/SNRP116, RPB1 and UBR5 and with RPB1 in a phosphorylation-independent manner. Interacts with the core C/D box snoRNP particle components NOP58 and FBL and with RUVBL1/TIP49. Interacts with RPAP3 and DNAAF10. Interacts with histone H4 and with SWI/SNF complex member SMARCB1/SNF5. Interacts with the mTORC1 complex member RPTOR. Interacts with MSL1.

The protein localises to the nucleus. Functionally, involved in the assembly of C/D box small nucleolar ribonucleoprotein (snoRNP) particles. Recruits the SWI/SNF complex to the core promoter of rRNA genes and enhances pre-rRNA transcription. Mediates interaction of TELO2 with the R2TP complex which is necessary for the stability of MTOR and SMG1. Positively regulates the assembly and activity of the mTORC1 complex. This chain is PIH1 domain-containing protein 1 (Pih1d1), found in Rattus norvegicus (Rat).